The primary structure comprises 247 residues: MLIIPAIDLKDGACVRLRQGLMDDATVFSDDPVAMAAKWVQAGCRRLHLVDLNGAFEGQPVNGEVVTAIAKRYPDLPIQIGGGIRTLETIEHYVRAGVSYVIIGTKAVKEPEFVTEACRAFPGKVIVGLDAKDGFVATDGWAEVSSVQAVDLARRFEADGVSAIVYTDIAKDGMMQGCNVEATVALANASRIPVIASGGIHNIGDIQKLLDTNTPGIIGAITGRAIYEGTLDVAEAQALCDLKLKDE.

Catalysis depends on Asp8, which acts as the Proton acceptor. Catalysis depends on Asp130, which acts as the Proton donor.

This sequence belongs to the HisA/HisF family.

It is found in the cytoplasm. The enzyme catalyses 1-(5-phospho-beta-D-ribosyl)-5-[(5-phospho-beta-D-ribosylamino)methylideneamino]imidazole-4-carboxamide = 5-[(5-phospho-1-deoxy-D-ribulos-1-ylimino)methylamino]-1-(5-phospho-beta-D-ribosyl)imidazole-4-carboxamide. Its pathway is amino-acid biosynthesis; L-histidine biosynthesis; L-histidine from 5-phospho-alpha-D-ribose 1-diphosphate: step 4/9. The chain is 1-(5-phosphoribosyl)-5-[(5-phosphoribosylamino)methylideneamino] imidazole-4-carboxamide isomerase from Stutzerimonas stutzeri (strain A1501) (Pseudomonas stutzeri).